The chain runs to 319 residues: Bidirectional sugar transporter SWEET15 (319 aa).

At 1–10 the chain is on the extracellular side; sequence MAFMSMERST. Residues 11 to 31 traverse the membrane as a helical segment; the sequence is WAFTFGILGNLISLMVFLSPL. A MtN3/slv 1 domain is found at 13-99; it reads FTFGILGNLI…AMYLAYAPKS (87 aa). At 32–50 the chain is on the cytoplasmic side; sequence PTFYRVYRKKSTEGFQSTP. The helical transmembrane segment at 51–71 threads the bilayer; the sequence is YVVTLFSCMLWMYYAFVKSGA. A topological domain (extracellular) is located at residue Glu72. The helical transmembrane segment at 73-93 threads the bilayer; that stretch reads LLVTINGVGCVIETVYLAMYL. Residues 94-106 are Cytoplasmic-facing; that stretch reads AYAPKSARMLTAK. The chain crosses the membrane as a helical span at residues 107 to 127; it reads MLLGLNIGLFGVIALVTLLLS. The Extracellular segment spans residues 128–134; it reads RGELRVH. A helical membrane pass occupies residues 135–155; it reads VLGWICVAVSLSVFAAPLSII. Positions 135–219 constitute a MtN3/slv 2 domain; the sequence is VLGWICVAVS…ALYMAYRSKK (85 aa). Over 156-167 the chain is Cytoplasmic; it reads RLVIRTKSVEFM. A helical transmembrane segment spans residues 168–188; sequence PFSLSFFLVLSAVIWFLYGLL. Residues 189–191 are Extracellular-facing; it reads KKD. Residues 192-212 traverse the membrane as a helical segment; it reads VFVALPNVLGFVFGVAQMALY. Topologically, residues 213 to 319 are cytoplasmic; it reads MAYRSKKPLV…KPDMAIVVEV (107 aa).

Belongs to the SWEET sugar transporter family. As to quaternary structure, forms homooligomers and/or heterooligomers.

The protein localises to the cell membrane. Mediates both low-affinity uptake and efflux of sugar across the plasma membrane. Its function is as follows. Confers blight susceptibility. Confers TAL effector-mediated susceptibility to Xanthomonas oryzae pv. oryzae. This Oryza sativa subsp. japonica (Rice) protein is Bidirectional sugar transporter SWEET15 (SWEET15).